Reading from the N-terminus, the 171-residue chain is Adenine phosphoribosyltransferase (171 aa).

The protein belongs to the purine/pyrimidine phosphoribosyltransferase family. Homodimer.

The protein localises to the cytoplasm. The enzyme catalyses AMP + diphosphate = 5-phospho-alpha-D-ribose 1-diphosphate + adenine. Its pathway is purine metabolism; AMP biosynthesis via salvage pathway; AMP from adenine: step 1/1. Catalyzes a salvage reaction resulting in the formation of AMP, that is energically less costly than de novo synthesis. The polypeptide is Adenine phosphoribosyltransferase (Mesomycoplasma hyopneumoniae (strain 232) (Mycoplasma hyopneumoniae)).